The chain runs to 55 residues: uncharacterized protein (55 aa).

The chain crosses the membrane as a helical span at residues 24 to 46; it reads LFIIFFTYSYYYCGFLQSFNYII.

It is found in the membrane. This is an uncharacterized protein from Dictyostelium discoideum (Social amoeba).